Consider the following 102-residue polypeptide: Head completion protein gp15 (102 aa).

It belongs to the Caudoviricetes gp6/gp15 head completion protein family. As to quaternary structure, homododecamer. Interacts with the stopper protein gp16. Interacts with the portal protein; this interaction occurs at the end of the packaging when the terminase complex is replaced by the connector.

The protein localises to the virion. Functionally, head completion protein that exhibits an open central channel for viral DNA ejection. Part of the head-tail connector by binding to the portal protein and to the head completion protein 16. In Bacillus phage SPP1 (Bacteriophage SPP1), this protein is Head completion protein gp15.